The chain runs to 273 residues: Large ribosomal subunit protein uL2cz/uL2cy (273 aa).

2 disordered regions span residues 1 to 20 (MAIH…AVDS) and 224 to 254 (NPVD…PALG).

Belongs to the universal ribosomal protein uL2 family. In terms of assembly, part of the 50S ribosomal subunit.

The protein resides in the plastid. Its subcellular location is the chloroplast. This Nuphar advena (Common spatterdock) protein is Large ribosomal subunit protein uL2cz/uL2cy (rpl2-A).